A 62-amino-acid chain; its full sequence is Protein DsrB (62 aa).

This sequence belongs to the DsrB family.

The chain is Protein DsrB from Shigella flexneri serotype 5b (strain 8401).